The primary structure comprises 670 residues: Cyclic di-GMP phosphodiesterase PdeA (670 aa).

One can recognise an EAL domain in the interval 428–670; it reads QNKIFQYILK…GFLWHKPEPI (243 aa).

It catalyses the reaction 3',3'-c-di-GMP + H2O = 5'-phosphoguanylyl(3'-&gt;5')guanosine + H(+). Its function is as follows. Phosphodiesterase (PDE) that catalyzes the hydrolysis of cyclic diguanylate (c-di-GMP) to pGpG. This Borreliella burgdorferi (strain ATCC 35210 / DSM 4680 / CIP 102532 / B31) (Borrelia burgdorferi) protein is Cyclic di-GMP phosphodiesterase PdeA.